The primary structure comprises 335 residues: Holliday junction branch migration complex subunit RuvB (335 aa).

The interval 4-184 (ADRLIDATEK…FGIVQRLEFY (181 aa)) is large ATPase domain (RuvB-L). Residues Ile-23, Arg-24, Gly-65, Lys-68, Thr-69, Thr-70, 131–133 (EDY), Arg-174, Tyr-184, and Arg-221 each bind ATP. Mg(2+) is bound at residue Thr-69. Positions 185–255 (SVEDLSYIVG…VAELALNMID (71 aa)) are small ATPAse domain (RuvB-S). The interval 258–335 (KSGFDYMDRK…HHFGLLPKQD (78 aa)) is head domain (RuvB-H). Residues Arg-313 and Arg-318 each coordinate DNA.

The protein belongs to the RuvB family. In terms of assembly, homohexamer. Forms an RuvA(8)-RuvB(12)-Holliday junction (HJ) complex. HJ DNA is sandwiched between 2 RuvA tetramers; dsDNA enters through RuvA and exits via RuvB. An RuvB hexamer assembles on each DNA strand where it exits the tetramer. Each RuvB hexamer is contacted by two RuvA subunits (via domain III) on 2 adjacent RuvB subunits; this complex drives branch migration. In the full resolvosome a probable DNA-RuvA(4)-RuvB(12)-RuvC(2) complex forms which resolves the HJ.

The protein resides in the cytoplasm. It catalyses the reaction ATP + H2O = ADP + phosphate + H(+). Its function is as follows. The RuvA-RuvB-RuvC complex processes Holliday junction (HJ) DNA during genetic recombination and DNA repair, while the RuvA-RuvB complex plays an important role in the rescue of blocked DNA replication forks via replication fork reversal (RFR). RuvA specifically binds to HJ cruciform DNA, conferring on it an open structure. The RuvB hexamer acts as an ATP-dependent pump, pulling dsDNA into and through the RuvAB complex. RuvB forms 2 homohexamers on either side of HJ DNA bound by 1 or 2 RuvA tetramers; 4 subunits per hexamer contact DNA at a time. Coordinated motions by a converter formed by DNA-disengaged RuvB subunits stimulates ATP hydrolysis and nucleotide exchange. Immobilization of the converter enables RuvB to convert the ATP-contained energy into a lever motion, pulling 2 nucleotides of DNA out of the RuvA tetramer per ATP hydrolyzed, thus driving DNA branch migration. The RuvB motors rotate together with the DNA substrate, which together with the progressing nucleotide cycle form the mechanistic basis for DNA recombination by continuous HJ branch migration. Branch migration allows RuvC to scan DNA until it finds its consensus sequence, where it cleaves and resolves cruciform DNA. The polypeptide is Holliday junction branch migration complex subunit RuvB (Pseudoalteromonas translucida (strain TAC 125)).